Reading from the N-terminus, the 169-residue chain is Putative phosphoesterase SERP0604 (169 aa).

Histidine 34 serves as the catalytic Proton donor. Short sequence motifs (HXTX) lie at residues 34–37 and 115–118; these read HITI and HFTI. Histidine 115 serves as the catalytic Proton acceptor.

Belongs to the 2H phosphoesterase superfamily. YjcG family.

The protein is Putative phosphoesterase SERP0604 of Staphylococcus epidermidis (strain ATCC 35984 / DSM 28319 / BCRC 17069 / CCUG 31568 / BM 3577 / RP62A).